We begin with the raw amino-acid sequence, 609 residues long: Arginine--tRNA ligase (609 aa).

The 'HIGH' region signature appears at 114-124 (VNPNKELHVGH).

Belongs to the class-I aminoacyl-tRNA synthetase family. In terms of assembly, monomer.

The protein localises to the cytoplasm. It carries out the reaction tRNA(Arg) + L-arginine + ATP = L-arginyl-tRNA(Arg) + AMP + diphosphate. The protein is Arginine--tRNA ligase of Deinococcus radiodurans (strain ATCC 13939 / DSM 20539 / JCM 16871 / CCUG 27074 / LMG 4051 / NBRC 15346 / NCIMB 9279 / VKM B-1422 / R1).